Here is a 187-residue protein sequence, read N- to C-terminus: MLYSDKDIRVAIDAGELGIEPFDADLIQPSSIDVRMDRLFRVFNNSKYTHIDPKQQQDELTSLVEVPEGEPFVLHPGEFVLGSTLEKFTLPAHIAGRLEGKSSLGRLGLLTHSTAGFIDPGFSGYITLELSNVANLPITLWPGMKVGQLALFKMTSPAQAPYGSNVLGSKYQGQRGPTPSKAYLNFR.

DCTP contacts are provided by residues 101-106 (KSSLGR), Asp119, 127-129 (TLE), Gln148, Tyr162, Lys170, and Gln174. Glu129 (proton donor/acceptor) is an active-site residue.

It belongs to the dCTP deaminase family. Homotrimer.

The catalysed reaction is dCTP + 2 H2O = dUMP + NH4(+) + diphosphate. It participates in pyrimidine metabolism; dUMP biosynthesis; dUMP from dCTP: step 1/1. Its function is as follows. Bifunctional enzyme that catalyzes both the deamination of dCTP to dUTP and the hydrolysis of dUTP to dUMP without releasing the toxic dUTP intermediate. The polypeptide is dCTP deaminase, dUMP-forming (Corynebacterium diphtheriae (strain ATCC 700971 / NCTC 13129 / Biotype gravis)).